We begin with the raw amino-acid sequence, 286 residues long: E3 ubiquitin-protein ligase SINA-like 7 (286 aa).

The RING-type zinc-finger motif lies at 51-87 (CPICYEAFTIPIFQCDNGHLACSSCCPKLNNKCPACT). The tract at residues 101–285 (VLESILIPCP…MRISVKKLNK (185 aa)) is SBD. Residues 104-162 (SILIPCPNAKLGCKKNVSYGKELTHEKECMFSHCACPALDCNYTSSYKDLYTHYRITHM) form an SIAH-type zinc finger. Residues C109, C116, H128, C132, C139, C144, H156, and H161 each contribute to the Zn(2+) site.

This sequence belongs to the SINA (Seven in absentia) family.

The enzyme catalyses S-ubiquitinyl-[E2 ubiquitin-conjugating enzyme]-L-cysteine + [acceptor protein]-L-lysine = [E2 ubiquitin-conjugating enzyme]-L-cysteine + N(6)-ubiquitinyl-[acceptor protein]-L-lysine.. The protein operates within protein modification; protein ubiquitination. In terms of biological role, E3 ubiquitin-protein ligase that mediates ubiquitination and subsequent proteasomal degradation of target proteins. E3 ubiquitin ligases accept ubiquitin from an E2 ubiquitin-conjugating enzyme in the form of a thioester and then directly transfers the ubiquitin to targeted substrates. It probably triggers the ubiquitin-mediated degradation of different substrates. The sequence is that of E3 ubiquitin-protein ligase SINA-like 7 from Arabidopsis thaliana (Mouse-ear cress).